The chain runs to 319 residues: Phosphatidylglycerol--prolipoprotein diacylglyceryl transferase (319 aa).

3 helical membrane-spanning segments follow: residues 21 to 41, 50 to 70, and 98 to 118; these read PIPI…AIWL, GGNP…GIIG, and NGGL…AVFF. An a 1,2-diacyl-sn-glycero-3-phospho-(1'-sn-glycerol)-binding site is contributed by arginine 144. 2 helical membrane-spanning segments follow: residues 191 to 211 and 254 to 274; these read VHPT…LLMW and INTI…FLLK. A disordered region spans residues 295–319; it reads AVASPDGKPLPKAGEGIDGETPSTR.

Belongs to the Lgt family.

It localises to the cell membrane. It carries out the reaction L-cysteinyl-[prolipoprotein] + a 1,2-diacyl-sn-glycero-3-phospho-(1'-sn-glycerol) = an S-1,2-diacyl-sn-glyceryl-L-cysteinyl-[prolipoprotein] + sn-glycerol 1-phosphate + H(+). The protein operates within protein modification; lipoprotein biosynthesis (diacylglyceryl transfer). Catalyzes the transfer of the diacylglyceryl group from phosphatidylglycerol to the sulfhydryl group of the N-terminal cysteine of a prolipoprotein, the first step in the formation of mature lipoproteins. This is Phosphatidylglycerol--prolipoprotein diacylglyceryl transferase from Corynebacterium glutamicum (strain R).